A 208-amino-acid polypeptide reads, in one-letter code: Holliday junction branch migration complex subunit RuvA (208 aa).

Positions 1-67 are domain I; that stretch reads MIGWLHGTIG…EDGQQLYGFE (67 aa). The tract at residues 68 to 146 is domain II; it reads TKADRNLFRL…ERWQQQGGST (79 aa). The interval 147–157 is flexible linker; sequence PLRLVEPVAES. The domain III stretch occupies residues 157 to 208; the sequence is SRELRATLEALGYGPEEVSAAVAQAGSQGLDPEQPMEEWLRHCLAWLSRQAG.

Belongs to the RuvA family. Homotetramer. Forms an RuvA(8)-RuvB(12)-Holliday junction (HJ) complex. HJ DNA is sandwiched between 2 RuvA tetramers; dsDNA enters through RuvA and exits via RuvB. An RuvB hexamer assembles on each DNA strand where it exits the tetramer. Each RuvB hexamer is contacted by two RuvA subunits (via domain III) on 2 adjacent RuvB subunits; this complex drives branch migration. In the full resolvosome a probable DNA-RuvA(4)-RuvB(12)-RuvC(2) complex forms which resolves the HJ.

Its subcellular location is the cytoplasm. Its function is as follows. The RuvA-RuvB-RuvC complex processes Holliday junction (HJ) DNA during genetic recombination and DNA repair, while the RuvA-RuvB complex plays an important role in the rescue of blocked DNA replication forks via replication fork reversal (RFR). RuvA specifically binds to HJ cruciform DNA, conferring on it an open structure. The RuvB hexamer acts as an ATP-dependent pump, pulling dsDNA into and through the RuvAB complex. HJ branch migration allows RuvC to scan DNA until it finds its consensus sequence, where it cleaves and resolves the cruciform DNA. This Synechococcus sp. (strain RCC307) protein is Holliday junction branch migration complex subunit RuvA.